We begin with the raw amino-acid sequence, 259 residues long: MASTVLRRLEGKVALITGAASGIGESAARLFSRHGAKVVIADIQDELALNICKDLGSTFVHCDVTKEFDVETAVNTAVSTYGKLDIMLNNAGISGAPKYKISNTQLSDFKRVVDVNLVGVFLGTKHAARVMIPNRSGSIISTASAATAAAAGTPYPYICSKHGVVGLTRNAAVEMGGHGIRVNCVSPYYVATPMTRDDDWIQGCFSNLKGAVLTAEDVAEAALYLASDESKYVSGHNLLVDGGVSIMNQGCNMFDLMDS.

A mitochondrion-targeting transit peptide spans 1 to 30; that stretch reads MASTVLRRLEGKVALITGAASGIGESAARL. Residues 21-23, D42, 63-64, and 90-92 contribute to the NAD(+) site; these read SGI, DV, and NAG. Residue S144 is the Proton donor of the active site. Substrate contacts are provided by S144 and Y157. Positions 157, 161, and 192 each coordinate NAD(+). Residue Y157 is the Proton acceptor of the active site. The Proton donor/acceptor role is filled by K161.

This sequence belongs to the short-chain dehydrogenases/reductases (SDR) family. In terms of tissue distribution, specifically expressed in glandular trichomes of mature flowers.

The protein resides in the mitochondrion. It carries out the reaction borneol + NAD(+) = camphor + NADH + H(+). It functions in the pathway secondary metabolite biosynthesis; terpenoid biosynthesis. Functionally, involved in the biosynthesis of monoterpenes natural products related to camphor. Catalyzes the conversion of borneol into camphor. The polypeptide is Borneol dehydrogenase, mitochondrial (Lavandula x intermedia (Lavandin)).